Consider the following 367-residue polypeptide: Glutamate 5-kinase (367 aa).

Lys10 lines the ATP pocket. Substrate is bound by residues Ser50, Asp137, and Asn149. Residues 169 to 170 and 211 to 217 each bind ATP; these read TD and TGGMSTK. In terms of domain architecture, PUA spans 275 to 353; sequence AGEITVDEGA…QEIDAILGYE (79 aa).

It belongs to the glutamate 5-kinase family.

Its subcellular location is the cytoplasm. It catalyses the reaction L-glutamate + ATP = L-glutamyl 5-phosphate + ADP. The protein operates within amino-acid biosynthesis; L-proline biosynthesis; L-glutamate 5-semialdehyde from L-glutamate: step 1/2. Catalyzes the transfer of a phosphate group to glutamate to form L-glutamate 5-phosphate. In Escherichia coli O81 (strain ED1a), this protein is Glutamate 5-kinase.